The sequence spans 396 residues: Elongation factor Tu 2 (396 aa).

Residues lysine 10–glutamine 206 enclose the tr-type G domain. Positions glycine 19–threonine 26 are G1. Glycine 19 to threonine 26 serves as a coordination point for GTP. Threonine 26 provides a ligand contact to Mg(2+). The interval glycine 60–asparagine 64 is G2. A G3 region spans residues aspartate 81 to glycine 84. GTP contacts are provided by residues aspartate 81–histidine 85 and asparagine 136–aspartate 139. The interval asparagine 136–aspartate 139 is G4. The G5 stretch occupies residues serine 174 to leucine 176.

Belongs to the TRAFAC class translation factor GTPase superfamily. Classic translation factor GTPase family. EF-Tu/EF-1A subfamily. Monomer.

The protein resides in the cytoplasm. It carries out the reaction GTP + H2O = GDP + phosphate + H(+). Its function is as follows. GTP hydrolase that promotes the GTP-dependent binding of aminoacyl-tRNA to the A-site of ribosomes during protein biosynthesis. In Nitrosomonas eutropha (strain DSM 101675 / C91 / Nm57), this protein is Elongation factor Tu 2.